The sequence spans 870 residues: Protein translocase subunit SecA (870 aa).

Residues Gln-86, 104 to 108 (GEGKT), and Asp-499 each bind ATP. Zn(2+) contacts are provided by Cys-854, Cys-856, Cys-865, and His-866.

This sequence belongs to the SecA family. In terms of assembly, monomer and homodimer. Part of the essential Sec protein translocation apparatus which comprises SecA, SecYEG and auxiliary proteins SecDF-YajC and YidC. It depends on Zn(2+) as a cofactor.

It localises to the cell inner membrane. The protein localises to the cytoplasm. The catalysed reaction is ATP + H2O + cellular proteinSide 1 = ADP + phosphate + cellular proteinSide 2.. Its function is as follows. Part of the Sec protein translocase complex. Interacts with the SecYEG preprotein conducting channel. Has a central role in coupling the hydrolysis of ATP to the transfer of proteins into and across the cell membrane, serving both as a receptor for the preprotein-SecB complex and as an ATP-driven molecular motor driving the stepwise translocation of polypeptide chains across the membrane. This Ehrlichia ruminantium (strain Welgevonden) protein is Protein translocase subunit SecA.